Consider the following 613-residue polypeptide: MRESLVAILVTVISVLGAIHQVKSHEDQPLSGIAVHKITFGLNEKAYVKASPTVLGSNGQHSELVLVQYSSPKPSDDDWIGVFSPADFNASTCPGDNKMVQPPRLCSAPVKFQYANFSNPRYTNTGTGSLKLQLINQRSDFSFALFSGGLLNPKLVAISNKVAFENPNAPVYPRLALGKEWDEMTVTWTSGYGLNLAEPVVEWGVKGGERKLSPAGTLTFARNSMCGAPARTVGWRDPGYIHTAFLKELWPNSKYTYRVGHRLSNGALIWSKEYQFKSSPFPGQNSVQQVVIFGDMGKAEVDGSSEYNDFQRASLNTTKQLIKDLKKTDAVFHIGDICYANGYLSQWDQFIAQIEPIASTVPYMIASGNHERVWPNSGSFYEGLDSGGECGVPAETMFYVPAQNRAKVWYSSDYGMFRFCVADTEHDWREGTEQYNFIEHCLASVDRQKQPWLIFLAHRVLGYSSTYFYAEEGSFAEPMGRESLQKLWQKYKVDIAIYGHAHNYERTCPVYQSVCTSHEKSNYKAPLNGTIHIVAGGGGAGLAEFSDLQPNWSLFRDYDYGFLKLTAIDHSNLLFEYKKSSDGRVHDSFTISKDYRDILACAVDSCPATTLAS.

The first 24 residues, 1-24, serve as a signal peptide directing secretion; sequence MRESLVAILVTVISVLGAIHQVKS. 2 N-linked (GlcNAc...) asparagine glycosylation sites follow: N89 and N116. D295 contacts Fe cation. The N-linked (GlcNAc...) asparagine glycan is linked to N316. 2 residues coordinate Fe cation: D336 and Y339. A Zn(2+)-binding site is contributed by D336. 3 residues coordinate Zn(2+): N369, H458, and H500. N369 contacts substrate. Position 500–502 (500–502) interacts with substrate; sequence HAH. H502 is a binding site for Fe cation. N-linked (GlcNAc...) asparagine glycosylation is found at N528 and N551.

Belongs to the metallophosphoesterase superfamily. Purple acid phosphatase family. In terms of assembly, homodimer. The cofactor is Fe cation. It depends on Zn(2+) as a cofactor. Expressed in roots, stems, leaves, flowers and siliques.

Its subcellular location is the secreted. This is Probable inactive purple acid phosphatase 1 (PAP1) from Arabidopsis thaliana (Mouse-ear cress).